Here is a 431-residue protein sequence, read N- to C-terminus: uncharacterized protein (431 aa).

12 helical membrane passes run 33–53 (VARVGTAAAVTALCGYAVIYL), 63–83 (FSVFGVFWGAFGLVTGAANGL), 111–131 (VSGMVGLGSLVVIAGSSPLWS), 143–163 (VALLSIGLAGFCLHATLLGML), 175–195 (LMVADAVIRVVVAAATFVIGW), 197–217 (LVGFIWATVAGSVAWLIMLMT), 241–261 (AHSIIAAGASAILVMGFPVLL), 273–293 (GVVILAVTLTRAPLLVPLTAM), 318–338 (LIGGVGAVGMLAAGVVGPWIM), 358–378 (AAAVAIAMLTLTGAAAVAAAL), 381–401 (AYSLGWVGATVGSGLLLLLPL), and 407–427 (TVVALLCGPLVGIGVHLVALA).

The protein to M.tuberculosis Rv1510 and M.bovis Mb3654.

It localises to the cell membrane. This is an uncharacterized protein from Mycobacterium tuberculosis (strain ATCC 25618 / H37Rv).